Here is a 482-residue protein sequence, read N- to C-terminus: uncharacterized protein (482 aa).

Composition is skewed to low complexity over residues 24–86 (SPNS…AQQQ) and 312–339 (TDSLCSSSTSTPSFNSTSSSSKNQSQSI). 2 disordered regions span residues 24 to 88 (SPNS…QQHY) and 307 to 376 (LHSQ…LIGK). A compositionally biased stretch (acidic residues) spans 342–363 (EEEEDGGEDEEEEGGEDNDNES).

This is an uncharacterized protein from Dictyostelium discoideum (Social amoeba).